A 187-amino-acid chain; its full sequence is Large ribosomal subunit protein uL5 (187 aa).

Belongs to the universal ribosomal protein uL5 family. In terms of assembly, part of the 50S ribosomal subunit; part of the 5S rRNA/L5/L18/L25 subcomplex. Contacts the 5S rRNA and the P site tRNA. Forms a bridge to the 30S subunit in the 70S ribosome.

This is one of the proteins that bind and probably mediate the attachment of the 5S RNA into the large ribosomal subunit, where it forms part of the central protuberance. In the 70S ribosome it contacts protein S13 of the 30S subunit (bridge B1b), connecting the 2 subunits; this bridge is implicated in subunit movement. Contacts the P site tRNA; the 5S rRNA and some of its associated proteins might help stabilize positioning of ribosome-bound tRNAs. The sequence is that of Large ribosomal subunit protein uL5 from Mycobacterium bovis (strain BCG / Tokyo 172 / ATCC 35737 / TMC 1019).